Reading from the N-terminus, the 382-residue chain is MTSSPTVNLLDLDAAGLVAYCDSLGEKPFRAKQLQRWIHQYNAADFDGMTDLAKSLREKLKGRASITMPPVVSDHISSDGTRKWLVDVGNGNAVETVYIPEETRGTLCVSSQAGCAVNCRFCSTGKQGFSRNLGTGEIIGQLRMAEFALRASRGTAGGRATGGDGKGERVVTNVVMMGMGEPLLNYDAVVPAMRLMLDDNAYGLSRRRVTLSTSGVVPMMDRLGADLPVALAVSLHAPNDALRDELVPLNKKYPLRELMAACQRYLKVAPRDFITFEYCMLDGVNDSEAHARELLAVTRDVPCKFNLIPFNPFPESGLLRSKSEQIKRFAQVLMDAGVVTTVRKTRGDDIDAACGQLAGAVKDRTRLAERTGKGKVIEVRAV.

Glu-95 (proton acceptor) is an active-site residue. One can recognise a Radical SAM core domain in the interval 101-349 (EETRGTLCVS…TTVRKTRGDD (249 aa)). Cysteines 108 and 354 form a disulfide. The [4Fe-4S] cluster site is built by Cys-115, Cys-119, and Cys-122. S-adenosyl-L-methionine contacts are provided by residues 180–181 (GE), Ser-212, 234–236 (SLH), and Asn-311. Cys-354 serves as the catalytic S-methylcysteine intermediate.

This sequence belongs to the radical SAM superfamily. RlmN family. The cofactor is [4Fe-4S] cluster.

The protein resides in the cytoplasm. It carries out the reaction adenosine(2503) in 23S rRNA + 2 reduced [2Fe-2S]-[ferredoxin] + 2 S-adenosyl-L-methionine = 2-methyladenosine(2503) in 23S rRNA + 5'-deoxyadenosine + L-methionine + 2 oxidized [2Fe-2S]-[ferredoxin] + S-adenosyl-L-homocysteine. It catalyses the reaction adenosine(37) in tRNA + 2 reduced [2Fe-2S]-[ferredoxin] + 2 S-adenosyl-L-methionine = 2-methyladenosine(37) in tRNA + 5'-deoxyadenosine + L-methionine + 2 oxidized [2Fe-2S]-[ferredoxin] + S-adenosyl-L-homocysteine. Functionally, specifically methylates position 2 of adenine 2503 in 23S rRNA and position 2 of adenine 37 in tRNAs. m2A2503 modification seems to play a crucial role in the proofreading step occurring at the peptidyl transferase center and thus would serve to optimize ribosomal fidelity. The sequence is that of Dual-specificity RNA methyltransferase RlmN from Paraburkholderia phymatum (strain DSM 17167 / CIP 108236 / LMG 21445 / STM815) (Burkholderia phymatum).